The primary structure comprises 496 residues: ATP-dependent protease ATPase subunit HslU2 (496 aa).

A mitochondrion-targeting transit peptide spans 1-10; that stretch reads MIRFSWVRLC. Residues Val-51 and 94 to 99 each bind ATP; that span reads GVGKTE. A compositionally biased stretch (low complexity) spans 177–191; it reads GSFGSSTRNSGSGDS. The tract at residues 177–204 is disordered; sequence GSFGSSTRNSGSGDSSAEEDKNSSSRDN. The ATP site is built by Asp-308, Glu-374, and Arg-446.

It belongs to the ClpX chaperone family. HslU subfamily. A double ring-shaped homohexamer of HslV is capped on each side by a ring-shaped HslU homohexamer. The assembly of the HslU/HslV complex (HslVU) is dependent on binding of ATP.

It is found in the mitochondrion matrix. The protein localises to the kinetoplast. Functionally, ATPase subunit of a proteasome-like degradation complex; this subunit has chaperone activity. The binding of ATP and its subsequent hydrolysis by HslU are essential for unfolding of protein substrates subsequently hydrolyzed by HslV. HslU recognizes the N-terminal part of its protein substrates and unfolds these before they are guided to HslV for hydrolysis. The HslVU protease complex functions in mitochondrial DNA replication by regulating DNA helicase PIF2 protein levels. This Trypanosoma brucei brucei (strain 927/4 GUTat10.1) protein is ATP-dependent protease ATPase subunit HslU2 (HslU2).